A 231-amino-acid polypeptide reads, in one-letter code: 5'-methylthioadenosine/S-adenosylhomocysteine nucleosidase (231 aa).

Residue Glu-12 is the Proton acceptor of the active site. Residues Gly-78, Val-153, and 174 to 175 (ME) contribute to the substrate site. Catalysis depends on Asp-198, which acts as the Proton donor.

It belongs to the PNP/UDP phosphorylase family. MtnN subfamily.

The catalysed reaction is S-adenosyl-L-homocysteine + H2O = S-(5-deoxy-D-ribos-5-yl)-L-homocysteine + adenine. The enzyme catalyses S-methyl-5'-thioadenosine + H2O = 5-(methylsulfanyl)-D-ribose + adenine. It catalyses the reaction 5'-deoxyadenosine + H2O = 5-deoxy-D-ribose + adenine. It participates in amino-acid biosynthesis; L-methionine biosynthesis via salvage pathway; S-methyl-5-thio-alpha-D-ribose 1-phosphate from S-methyl-5'-thioadenosine (hydrolase route): step 1/2. Its function is as follows. Catalyzes the irreversible cleavage of the glycosidic bond in both 5'-methylthioadenosine (MTA) and S-adenosylhomocysteine (SAH/AdoHcy) to adenine and the corresponding thioribose, 5'-methylthioribose and S-ribosylhomocysteine, respectively. Also cleaves 5'-deoxyadenosine, a toxic by-product of radical S-adenosylmethionine (SAM) enzymes, into 5-deoxyribose and adenine. The chain is 5'-methylthioadenosine/S-adenosylhomocysteine nucleosidase from Vibrio cholerae serotype O1 (strain ATCC 39315 / El Tor Inaba N16961).